We begin with the raw amino-acid sequence, 170 residues long: Large ribosomal subunit protein uL15 (170 aa).

Basic and acidic residues predominate over residues 1-12 (MKLHDLRPAEGA). The disordered stretch occupies residues 1 to 52 (MKLHDLRPAEGAHRKRKRIGRGHGSGKGKTGGKGMMGQKARSGPGPYRTFEG). Residues 13-26 (HRKRKRIGRGHGSG) are compositionally biased toward basic residues.

It belongs to the universal ribosomal protein uL15 family. In terms of assembly, part of the 50S ribosomal subunit.

Binds to the 23S rRNA. The chain is Large ribosomal subunit protein uL15 from Chloroflexus aurantiacus (strain ATCC 29366 / DSM 635 / J-10-fl).